A 310-amino-acid chain; its full sequence is Quinolinate synthase (310 aa).

Positions 27 and 44 each coordinate iminosuccinate. Cys89 provides a ligand contact to [4Fe-4S] cluster. Iminosuccinate is bound by residues 115 to 117 (YVN) and Ser132. Cys175 contacts [4Fe-4S] cluster. Residues 201-203 (HPE) and Thr222 contribute to the iminosuccinate site. Cys267 provides a ligand contact to [4Fe-4S] cluster.

The protein belongs to the quinolinate synthase family. Type 2 subfamily. Requires [4Fe-4S] cluster as cofactor.

The protein localises to the cytoplasm. The catalysed reaction is iminosuccinate + dihydroxyacetone phosphate = quinolinate + phosphate + 2 H2O + H(+). It functions in the pathway cofactor biosynthesis; NAD(+) biosynthesis; quinolinate from iminoaspartate: step 1/1. Functionally, catalyzes the condensation of iminoaspartate with dihydroxyacetone phosphate to form quinolinate. The chain is Quinolinate synthase from Thermus thermophilus (strain ATCC BAA-163 / DSM 7039 / HB27).